We begin with the raw amino-acid sequence, 94 residues long: Serine protease inhibitor Kazal-type 13 (94 aa).

The first 23 residues, 1 to 23 (MAAFPHKIIFFLVCSTLTHVAFS), serve as a signal peptide directing secretion. In terms of domain architecture, Kazal-like spans 33–94 (RWPKPRCKMY…IKFEKYGKCD (62 aa)). 3 disulfide bridges follow: Cys39/Cys75, Cys53/Cys72, and Cys61/Cys93. N-linked (GlcNAc...) asparagine glycosylation is present at Asn55.

It is found in the secreted. In terms of biological role, may be a serine protease inhibitor. Essential for sperm maturation and fertility. Inhibits sperm acrosome reaction, protecting sperm from premature reaction. The polypeptide is Serine protease inhibitor Kazal-type 13 (SPINK13) (Homo sapiens (Human)).